Here is a 120-residue protein sequence, read N- to C-terminus: Cu-Zn superoxide dismutase-like protein OPG175 (120 aa).

An intrachain disulfide couples Cys52 to Cys102.

This sequence belongs to the Cu-Zn superoxide dismutase family.

The protein localises to the virion. It localises to the host cytoplasm. Its function is as follows. Superoxide dismutase-like protein with no enzymatic activity. The sequence is that of Cu-Zn superoxide dismutase-like protein OPG175 (OPG175) from Vaccinia virus (strain Tashkent) (VACV).